The sequence spans 473 residues: Photosystem II CP43 reaction center protein (473 aa).

The propeptide occupies 1 to 14; the sequence is MKTLYSLRRFYPVE. Residue threonine 15 is modified to N-acetylthreonine. Threonine 15 bears the Phosphothreonine mark. 5 helical membrane-spanning segments follow: residues 69 to 93, 134 to 155, 178 to 200, 255 to 275, and 291 to 312; these read LFEVAHFVPEKPMYEQGLILLPHLA, LLGPETLEESFPFFGYVWKDRN, KALYFGGVYDTWAPGGGDVRKIT, KPFAWARRALVWSGEAYLSYS, and WFNNTAYPSEFYGPTGPEASQA. Residue glutamate 367 participates in [CaMn4O5] cluster binding. A helical membrane pass occupies residues 447–471; it reads RARAAAAGFEKGIDRDFEPALSMTP.

Belongs to the PsbB/PsbC family. PsbC subfamily. In terms of assembly, PSII is composed of 1 copy each of membrane proteins PsbA, PsbB, PsbC, PsbD, PsbE, PsbF, PsbH, PsbI, PsbJ, PsbK, PsbL, PsbM, PsbT, PsbX, PsbY, PsbZ, Psb30/Ycf12, at least 3 peripheral proteins of the oxygen-evolving complex and a large number of cofactors. It forms dimeric complexes. Requires Binds multiple chlorophylls and provides some of the ligands for the Ca-4Mn-5O cluster of the oxygen-evolving complex. It may also provide a ligand for a Cl- that is required for oxygen evolution. PSII binds additional chlorophylls, carotenoids and specific lipids. as cofactor.

It localises to the plastid. The protein resides in the chloroplast thylakoid membrane. Functionally, one of the components of the core complex of photosystem II (PSII). It binds chlorophyll and helps catalyze the primary light-induced photochemical processes of PSII. PSII is a light-driven water:plastoquinone oxidoreductase, using light energy to abstract electrons from H(2)O, generating O(2) and a proton gradient subsequently used for ATP formation. The polypeptide is Photosystem II CP43 reaction center protein (Oenothera argillicola (Appalachian evening primrose)).